We begin with the raw amino-acid sequence, 342 residues long: GTPase Obg (342 aa).

In terms of domain architecture, Obg spans 1-159; sequence MKFLDEAKVY…MWIWLRLKLI (159 aa). In terms of domain architecture, OBG-type G spans 160–327; it reads ADAGLVGLPN…ALRALQTEID (168 aa). GTP is bound by residues 166 to 173, 191 to 195, 212 to 215, 279 to 282, and 308 to 310; these read GLPNAGKS, FTTLH, DIPG, SKAD, and SSA. Residues Ser-173 and Thr-193 each coordinate Mg(2+).

The protein belongs to the TRAFAC class OBG-HflX-like GTPase superfamily. OBG GTPase family. In terms of assembly, monomer. The cofactor is Mg(2+).

It is found in the cytoplasm. Functionally, an essential GTPase which binds GTP, GDP and possibly (p)ppGpp with moderate affinity, with high nucleotide exchange rates and a fairly low GTP hydrolysis rate. Plays a role in control of the cell cycle, stress response, ribosome biogenesis and in those bacteria that undergo differentiation, in morphogenesis control. In Methylobacterium radiotolerans (strain ATCC 27329 / DSM 1819 / JCM 2831 / NBRC 15690 / NCIMB 10815 / 0-1), this protein is GTPase Obg.